The sequence spans 98 residues: Acylphosphatase (98 aa).

One can recognise an Acylphosphatase-like domain in the interval 12 to 98 (TYYVRVRGVV…EKRFERFQQQ (87 aa)). Residues arginine 27 and asparagine 45 contribute to the active site.

The protein belongs to the acylphosphatase family.

The enzyme catalyses an acyl phosphate + H2O = a carboxylate + phosphate + H(+). The polypeptide is Acylphosphatase (acyP) (Burkholderia cenocepacia (strain HI2424)).